We begin with the raw amino-acid sequence, 84 residues long: UPF0297 protein Csac_1773 (84 aa).

This sequence belongs to the UPF0297 family.

This is UPF0297 protein Csac_1773 from Caldicellulosiruptor saccharolyticus (strain ATCC 43494 / DSM 8903 / Tp8T 6331).